Consider the following 820-residue polypeptide: Mitogen-activated protein kinase kinase kinase kinase 2 (820 aa).

The region spanning 16-273 is the Protein kinase domain; the sequence is FELLQRVGAG…AEKLLQHPFT (258 aa). Residues 22-30 and lysine 45 each bind ATP; that span reads VGAGTYGDV. Aspartate 136 functions as the Proton acceptor in the catalytic mechanism. The segment at 294-314 is PEST1; that stretch reads LGTPSPEDCELETYDMFPDTI. A Phosphoserine modification is found at serine 328. The PEST2 stretch occupies residues 344–360; that stretch reads ETDPLNEPWEEEWTLLG. The tract at residues 387 to 442 is disordered; it reads SEFQELDSPDDTMGTIKRAPFLGPLPTDPPAEEPLSSPPGTLPPPPSGPNSSPLLP. Serine 394 is modified (phosphoserine). A PEST3 region spans residues 405–448; that stretch reads APFLGPLPTDPPAEEPLSSPPGTLPPPPSGPNSSPLLPTAWATM. A compositionally biased stretch (pro residues) spans 422 to 434; it reads SSPPGTLPPPPSG. Positions 482 to 793 constitute a CNH domain; sequence PLRIHAAVTW…IFRVLGAHRD (312 aa).

Belongs to the protein kinase superfamily. STE Ser/Thr protein kinase family. STE20 subfamily. Interacts with TRAF2, TRAF6, MAP3K1/MEKK1 and MAP3K11/MLK3. Interacts with RAB8A. Requires Mg(2+) as cofactor. In terms of processing, polyubiquitinated through 'Lys-48'-polyubiquitin chains, allowing proteasomal turnover. Ubiquitination requires the kinase activity of MAP4K2/GCK. Post-translationally, autophosphorylated in response to tumor necrosis factor (TNF), endotoxins or pro-inflammatory stimuli. Autophosphorylation leads to activation. Highly expressed in germinal center but not mantle zone B-cells. Also expressed in lung, brain and placenta and at lower levels in other tissues examined.

Its subcellular location is the cytoplasm. The protein resides in the basolateral cell membrane. The protein localises to the golgi apparatus membrane. It carries out the reaction L-seryl-[protein] + ATP = O-phospho-L-seryl-[protein] + ADP + H(+). The enzyme catalyses L-threonyl-[protein] + ATP = O-phospho-L-threonyl-[protein] + ADP + H(+). The tumor necrosis factor (TNF), as well as endotoxins and pro-inflammatory stimuli such as polyinosine-polycytidine (poly(IC)), lipopolysaccharides (LPS), peptidoglycan (PGN), flagellin, or lipid A activate MAP4K2 by promoting its autophosphorylation. Its function is as follows. Serine/threonine-protein kinase which acts as an essential component of the MAP kinase signal transduction pathway. Acts as a MAPK kinase kinase kinase (MAP4K) and is an upstream activator of the stress-activated protein kinase/c-Jun N-terminal kinase (SAP/JNK) signaling pathway and to a lesser extent of the p38 MAPKs signaling pathway. Required for the efficient activation of JNKs by TRAF6-dependent stimuli, including pathogen-associated molecular patterns (PAMPs) such as polyinosine-polycytidine (poly(IC)), lipopolysaccharides (LPS), lipid A, peptidoglycan (PGN), or bacterial flagellin. To a lesser degree, IL-1 and engagement of CD40 also stimulate MAP4K2-mediated JNKs activation. The requirement for MAP4K2/GCK is most pronounced for LPS signaling, and extends to LPS stimulation of c-Jun phosphorylation and induction of IL-8. Enhances MAP3K1 oligomerization, which may relieve N-terminal mediated MAP3K1 autoinhibition and lead to activation following autophosphorylation. Also mediates the SAP/JNK signaling pathway and the p38 MAPKs signaling pathway through activation of the MAP3Ks MAP3K10/MLK2 and MAP3K11/MLK3. May play a role in the regulation of vesicle targeting or fusion. regulation of vesicle targeting or fusion. Activator of the Hippo signaling pathway which plays a pivotal role in organ size control and tumor suppression by restricting proliferation and promoting apoptosis. MAP4Ks act in parallel to and are partially redundant with STK3/MST2 and STK4/MST2 in the phosphorylation and activation of LATS1/2, and establish MAP4Ks as components of the expanded Hippo pathway. The sequence is that of Mitogen-activated protein kinase kinase kinase kinase 2 from Homo sapiens (Human).